Reading from the N-terminus, the 342-residue chain is Phosphatidate cytidylyltransferase, mitochondrial (342 aa).

This sequence belongs to the TAM41 family. Mg(2+) is required as a cofactor. Requires Co(2+) as cofactor. Cu(2+) serves as cofactor.

Its subcellular location is the mitochondrion inner membrane. It catalyses the reaction a 1,2-diacyl-sn-glycero-3-phosphate + CTP + H(+) = a CDP-1,2-diacyl-sn-glycerol + diphosphate. Its pathway is phospholipid metabolism; CDP-diacylglycerol biosynthesis; CDP-diacylglycerol from sn-glycerol 3-phosphate: step 3/3. Catalyzes the formation of CDP-diacylglycerol (CDP-DAG) from phosphatidic acid (PA) in the mitochondrial inner membrane. Required for the biosynthesis of the dimeric phospholipid cardiolipin, which stabilizes supercomplexes of the mitochondrial respiratory chain in the mitochondrial inner membrane. This Drosophila melanogaster (Fruit fly) protein is Phosphatidate cytidylyltransferase, mitochondrial.